A 229-amino-acid polypeptide reads, in one-letter code: MGQKVHPNGIRLGITKPWISTWYADKSDYANNLNSDWEVRQYLTEKLKAASVSKIVIERPAKSIRVTIHTARPGVVIGKKGEDVEVLRAQVAKITGTTAQINIAEIRKPELDAKLVADSIAQQLERRVMFRRAMKRAVQNAMRIGAQGIKVEVSGRLGGAEIARSEWYREGRVPLHTLRADIDYSTSESHTQYGVIGVKVWIFKGEVLDGLVPQIEEPKQQPKRKPRAK.

Positions 39 to 107 constitute a KH type-2 domain; sequence VRQYLTEKLK…TAQINIAEIR (69 aa).

It belongs to the universal ribosomal protein uS3 family. Part of the 30S ribosomal subunit. Forms a tight complex with proteins S10 and S14.

In terms of biological role, binds the lower part of the 30S subunit head. Binds mRNA in the 70S ribosome, positioning it for translation. The polypeptide is Small ribosomal subunit protein uS3 (Shewanella denitrificans (strain OS217 / ATCC BAA-1090 / DSM 15013)).